Consider the following 220-residue polypeptide: MNLRQLSEHVFQCEFELDVPLRIPVHTWFIKDGDDVYIVDTGIERFADAQIRAALAIGNPKAILLTHGHSDHIGGASKWLERFDIPIFAHQKELKYINGEEPYPNKNEVENTGVAHIVQPLTEQTLAHLPLKYYLTPGHSPGHVVYYHKIDRTLLTGDLFITSKEDLHPPIRRFSVDINENIDSGSIIDQIKPTLICSSHGEEILYNEELYKNYVVRYRD.

The Zn(2+) site is built by His67, His69, Asp71, His72, His139, Asp158, and His200.

Belongs to the metallo-beta-lactamase superfamily. Zn(2+) serves as cofactor.

This Bacillus subtilis (strain 168) protein is Probable metallo-hydrolase YybB (yybB).